We begin with the raw amino-acid sequence, 682 residues long: uncharacterized protein (682 aa).

This is an uncharacterized protein from Saccharomyces cerevisiae (strain ATCC 204508 / S288c) (Baker's yeast).